A 393-amino-acid chain; its full sequence is MVTLGTAGTASARKMMLLGGGELGKEVVIEAQRLGVEVIVVDRYENTPAMQVAHRSYVISMLDTAELRRVVETEKPDYIVPEIEAIATETLLELEKEGFNVVPTARATRLTMDREGIRRLAAEEVGLKTSPYKFADTKEEYLEAIKEIGIPCVIKPVMSSSGKGQSTVKSEADVDRAWDYSQSGGRTGEGRIIVESFVDFDYEITLLTVRHAGGTSYCAPIGHRQDDGDYRESWQPQPMSDAALANAQDYALRITDALGGRGLFGVELFIKGEEVIFSEVSPRPHDTGLVTVISQDLSEFALHVRAILGLPIPAIRQYGPAASSVILSNGKSEAPAFANVDKALEAADTKVLIFGKGECNGVRRLGVALALGEDVTDAKARAIRASSAVEIEY.

N(1)-(5-phospho-beta-D-ribosyl)glycinamide contacts are provided by residues glutamate 22 to leucine 23 and glutamate 82. ATP is bound by residues arginine 114, lysine 155, serine 160–glutamine 165, glutamate 195–valine 198, and glutamate 203. The ATP-grasp domain occupies arginine 119 to leucine 308. Mg(2+)-binding residues include glutamate 267 and glutamate 279. N(1)-(5-phospho-beta-D-ribosyl)glycinamide contacts are provided by residues aspartate 286, lysine 356, and arginine 363–arginine 364.

Belongs to the PurK/PurT family. As to quaternary structure, homodimer.

It catalyses the reaction N(1)-(5-phospho-beta-D-ribosyl)glycinamide + formate + ATP = N(2)-formyl-N(1)-(5-phospho-beta-D-ribosyl)glycinamide + ADP + phosphate + H(+). Its pathway is purine metabolism; IMP biosynthesis via de novo pathway; N(2)-formyl-N(1)-(5-phospho-D-ribosyl)glycinamide from N(1)-(5-phospho-D-ribosyl)glycinamide (formate route): step 1/1. In terms of biological role, involved in the de novo purine biosynthesis. Catalyzes the transfer of formate to 5-phospho-ribosyl-glycinamide (GAR), producing 5-phospho-ribosyl-N-formylglycinamide (FGAR). Formate is provided by PurU via hydrolysis of 10-formyl-tetrahydrofolate. In Maridesulfovibrio salexigens (strain ATCC 14822 / DSM 2638 / NCIMB 8403 / VKM B-1763) (Desulfovibrio salexigens), this protein is Formate-dependent phosphoribosylglycinamide formyltransferase.